We begin with the raw amino-acid sequence, 707 residues long: Transcription factor 12 (707 aa).

The disordered stretch occupies residues 25-109 (AMFSPPVNSG…TPFMNSNLIG (85 aa)). 2 stretches are compositionally biased toward polar residues: residues 30-48 (PVNS…QFSG) and 56-76 (GTTS…SRGF). Residues Ser47, Ser67, and Ser79 each carry the phosphoserine modification. Residues 81–93 (HYSDHLNDSRLGT) are compositionally biased toward basic and acidic residues. A Phosphoserine modification is found at Ser98. Lys110 participates in a covalent cross-link: Glycyl lysine isopeptide (Lys-Gly) (interchain with G-Cter in SUMO2). A phosphoserine mark is found at Ser116 and Ser124. Residues 119–140 (LYSRDSGLSGCQSSLLRQDLGL) form a leucine-zipper region. Disordered regions lie at residues 140–222 (LGSP…SMFA) and 249–313 (FGGI…ASHT). Positions 144 to 163 (AQLSSSGKPGTPYYSFSATS) are enriched in polar residues. Lys181 is covalently cross-linked (Glycyl lysine isopeptide (Lys-Gly) (interchain with G-Cter in SUMO2)). Residues 256-269 (STSHMSQSSSYGSL) are compositionally biased toward low complexity. Over residues 282–306 (VSPTDINTSLPPMSSFHRGSTSSSP) the composition is skewed to polar residues. Thr313 is modified (phosphothreonine). Residue Ser333 is modified to Phosphoserine. 2 disordered regions span residues 349–393 (PDHT…YENS) and 521–605 (HKTP…ERRM). The span at 352–363 (TSSSFPSNPSTP) shows a compositional bias: low complexity. 2 stretches are compositionally biased toward polar residues: residues 364-377 (VGSP…TSQW) and 384-393 (APSSPSYENS). Basic and acidic residues-rich tracts occupy residues 543-555 (IKTE…ENLH) and 561-576 (DDMK…DIKV). Lys544 is covalently cross-linked (Glycyl lysine isopeptide (Lys-Gly) (interchain with G-Cter in SUMO2)). The residue at position 565 (Ser565) is a Phosphoserine. Lys575 is covalently cross-linked (Glycyl lysine isopeptide (Lys-Gly) (interchain with G-Cter in SUMO2)). Thr582 carries the phosphothreonine modification. 2 positions are modified to phosphoserine: Ser583 and Ser584. Positions 593–605 (PEQKIEREKERRM) are enriched in basic and acidic residues. The bHLH domain occupies 602-655 (ERRMANNARERLRVRDINEAFKELGRMCQLHLKSEKPQTKLLILHQAVAVILSL). Residues Lys634 and Lys678 each participate in a glycyl lysine isopeptide (Lys-Gly) (interchain with G-Cter in SUMO2) cross-link. Residues 657–680 (QQVRERNLNPKAACLKRREEEKVS) are class A specific domain. Residues 675-707 (EEEKVSAASAEPPTTLPGTHPGLSETTNPMGHL) are disordered. Over residues 686–697 (PPTTLPGTHPGL) the composition is skewed to low complexity. A compositionally biased stretch (polar residues) spans 698 to 707 (SETTNPMGHL).

In terms of assembly, efficient DNA binding requires dimerization with another bHLH protein. Forms homo- or heterooligomers with myogenin, E12 and ITF2 proteins. Interacts with PTF1. Interacts with RUNX1T1. Interacts with NEUROD2. Interacts with BHLHA9. Isoform gamma is highly expressed in lung, kidney, spleen, and is expressed at reduced levels in heart, muscle, liver, pituitary, brain and the trigeminal ganglion. The expression of isoform alpha predominates over isoform gamma in the pituitary and the brain.

The protein resides in the nucleus. Functionally, transcriptional regulator. Involved in the initiation of neuronal differentiation. Activates transcription by binding to the E box (5'-CANNTG-3'). May be involved in the functional network that regulates the development of the GnRH axis. The polypeptide is Transcription factor 12 (Tcf12) (Rattus norvegicus (Rat)).